Reading from the N-terminus, the 109-residue chain is Cell cycle protein GpsB (109 aa).

A coiled-coil region spans residues 36 to 63 (IKDYETYAALVKSLRQEIADLKEELTRK).

The protein belongs to the GpsB family. Forms polymers through the coiled coil domains. Interacts with PBP1, MreC and EzrA.

It localises to the cytoplasm. In terms of biological role, divisome component that associates with the complex late in its assembly, after the Z-ring is formed, and is dependent on DivIC and PBP2B for its recruitment to the divisome. Together with EzrA, is a key component of the system that regulates PBP1 localization during cell cycle progression. Its main role could be the removal of PBP1 from the cell pole after pole maturation is completed. Also contributes to the recruitment of PBP1 to the division complex. Not essential for septum formation. This is Cell cycle protein GpsB from Streptococcus pneumoniae serotype 4 (strain ATCC BAA-334 / TIGR4).